The primary structure comprises 121 residues: Large ribosomal subunit protein bL12 (121 aa).

The protein belongs to the bacterial ribosomal protein bL12 family. In terms of assembly, homodimer. Part of the ribosomal stalk of the 50S ribosomal subunit. Forms a multimeric L10(L12)X complex, where L10 forms an elongated spine to which 2 to 4 L12 dimers bind in a sequential fashion. Binds GTP-bound translation factors.

Forms part of the ribosomal stalk which helps the ribosome interact with GTP-bound translation factors. Is thus essential for accurate translation. The protein is Large ribosomal subunit protein bL12 of Vibrio cholerae serotype O1 (strain ATCC 39541 / Classical Ogawa 395 / O395).